Reading from the N-terminus, the 120-residue chain is Large ribosomal subunit protein bL20 (120 aa).

It belongs to the bacterial ribosomal protein bL20 family.

Its function is as follows. Binds directly to 23S ribosomal RNA and is necessary for the in vitro assembly process of the 50S ribosomal subunit. It is not involved in the protein synthesizing functions of that subunit. This Cereibacter sphaeroides (strain ATCC 17025 / ATH 2.4.3) (Rhodobacter sphaeroides) protein is Large ribosomal subunit protein bL20.